The sequence spans 408 residues: G patch domain-containing protein 4 (408 aa).

Position 1 is an N-acetylmethionine (Met1). Thr4 is subject to Phosphothreonine. Positions 11–57 constitute a G-patch domain; the sequence is GMKFAEEQLLKHGWTQGKGLGRKENGITQALRVTLKQDTYGVGHDPA. Lys46 is covalently cross-linked (Glycyl lysine isopeptide (Lys-Gly) (interchain with G-Cter in SUMO2)). Phosphothreonine is present on Thr116. Disordered stretches follow at residues 116–141 and 187–408; these read TSSGEKPDKDWESCSDDDSQEPKPPN and GQDP…KKRD. Residues Ser128 and Ser130 each carry the phosphoserine modification. Composition is skewed to basic and acidic residues over residues 222-236, 245-257, and 274-283; these read RSAEKYSEHTDESIR, HQEERVTDEREGT, and LKNREHVDRS. Residues 340 to 354 are compositionally biased toward acidic residues; sequence EEDLNTEDEEVEEAL. The segment covering 358-372 has biased composition (basic and acidic residues); that stretch reads GTREAESRSCSDQKR. Residues 398–408 show a composition bias toward basic residues; the sequence is KAKKKKQKKRD.

This chain is G patch domain-containing protein 4 (GPATCH4), found in Bos taurus (Bovine).